A 200-amino-acid chain; its full sequence is Recombination protein RecR (200 aa).

Residues 58–75 (CPTCFCLKSHPESVCSFC) form a C4-type zinc finger. Residues 82 to 177 (SILCIVATPK…SVSRLALGLP (96 aa)) enclose the Toprim domain.

It belongs to the RecR family.

May play a role in DNA repair. It seems to be involved in an RecBC-independent recombinational process of DNA repair. It may act with RecF and RecO. The sequence is that of Recombination protein RecR from Chlamydia abortus (strain DSM 27085 / S26/3) (Chlamydophila abortus).